Consider the following 85-residue polypeptide: uncharacterized protein (85 aa).

The N-terminal stretch at 1-21 (MRPLLCALAGLALLCAVGALA) is a signal peptide. The span at 22 to 35 (DGREDRGSPGDTGE) shows a compositional bias: basic and acidic residues. The segment at 22 to 85 (DGREDRGSPG…EVVHLPGSTL (64 aa)) is disordered. Residues 36–51 (RPAGPARGPGLEPARG) are compositionally biased toward low complexity.

Its subcellular location is the secreted. This is an uncharacterized protein from Homo sapiens (Human).